Consider the following 358-residue polypeptide: MAIVLDGKCLCYHGPLLYEAKVLRVYDEKNQTITSKDYKDVSIDDEKVEFDRPPEHMRQGQCYFVHYQGWKSSWDEWVGLDRIRPYNDENLELKKSLVEKARELKNNGGKKKSGSRPVGRPSKVEKGKKAASRTSNSGSGTNTSASSTSASNPASSSSSGTTAAASSSDKSDRKKATPVLNKRSHPKIHIKVPISLRSVLVDDWENVTKDRKLVQLPSERPIEHILSQFYADTSNSTSSVVEQAQLSEFLQGIKLYFNLSLGKLLLYRLERIQYAELLKAHSEKQYTEIYGIIHLLRLVTLLPEMMESSNVDDQTAKILVKQCDILLEWIAINIARKNFPVDPYINTSSQYEGVALSM.

The Tudor-knot domain occupies 8 to 84; sequence KCLCYHGPLL…DEWVGLDRIR (77 aa). The tract at residues 103-184 is disordered; the sequence is ELKNNGGKKK…KATPVLNKRS (82 aa). The span at 132-168 shows a compositional bias: low complexity; the sequence is SRTSNSGSGTNTSASSTSASNPASSSSSGTTAAASSS. Residues 184–356 enclose the MRG domain; that stretch reads SHPKIHIKVP…TSSQYEGVAL (173 aa).

This sequence belongs to the MRG family. In terms of assembly, component of the NuA4 histone acetyltransferase complex.

It localises to the nucleus. Involved in deacetylation of histones, chromatin assembly and chromosome segregation. May act as a transcriptional oscillator, directing histone deacetylases to specific chromosomal domains. Component of the NuA4 histone acetyltransferase complex which is involved in transcriptional activation of selected genes principally by acetylation of nucleosomal histone H4 and H2A. The NuA4 complex is also involved in DNA repair. The protein is Chromatin modification-related protein EAF3 (EAF3) of Kluyveromyces lactis (strain ATCC 8585 / CBS 2359 / DSM 70799 / NBRC 1267 / NRRL Y-1140 / WM37) (Yeast).